The chain runs to 91 residues: Small ribosomal subunit protein bS18 (91 aa).

A disordered region spans residues 1 to 21 (MSDERTPQRSSGPRKKRPFQR). Basic residues predominate over residues 12–21 (GPRKKRPFQR).

Belongs to the bacterial ribosomal protein bS18 family. In terms of assembly, part of the 30S ribosomal subunit. Forms a tight heterodimer with protein bS6.

Binds as a heterodimer with protein bS6 to the central domain of the 16S rRNA, where it helps stabilize the platform of the 30S subunit. The sequence is that of Small ribosomal subunit protein bS18 from Geotalea uraniireducens (strain Rf4) (Geobacter uraniireducens).